We begin with the raw amino-acid sequence, 500 residues long: Protein DETOXIFICATION 29 (500 aa).

12 consecutive transmembrane segments (helical) span residues 67-87 (GAIT…AVSV), 91-111 (VVAG…ETLC), 132-152 (VILN…APIL), 161-181 (ISSA…AYAI), 197-217 (VMAV…WFVI), 227-247 (LAVV…VYIF), 277-297 (AVML…AGYL), 302-322 (ISVA…MIAI), 349-369 (LVAV…LLIF), 393-413 (ILAL…VAVG), 419-439 (VVAY…GLLL), and 449-469 (GIWC…TWMI).

Belongs to the multi antimicrobial extrusion (MATE) (TC 2.A.66.1) family.

It localises to the vacuole membrane. The polypeptide is Protein DETOXIFICATION 29 (Arabidopsis thaliana (Mouse-ear cress)).